Consider the following 308-residue polypeptide: uncharacterized protein (308 aa).

An N-terminal signal peptide occupies residues 1–17 (MKSLALLLSLLINFSIG). N-linked (GlcNAc...) asparagine glycosylation is found at asparagine 13, asparagine 91, asparagine 159, and asparagine 210. The tract at residues 213-308 (DEISGGTGAG…HDNYISSFCT (96 aa)) is disordered. Gly residues-rich tracts occupy residues 217–231 (GGTG…GSGS) and 239–252 (SDGG…GSGS). A compositionally biased stretch (low complexity) spans 267–284 (NKNNNKNKNNNNNNNNYN).

The protein resides in the secreted. This is an uncharacterized protein from Dictyostelium discoideum (Social amoeba).